We begin with the raw amino-acid sequence, 311 residues long: Malate dehydrogenase (311 aa).

Residues 10–15 (GAGRVG) and Asp-35 contribute to the NAD(+) site. The substrate site is built by Arg-84 and Arg-90. Residues Asn-97 and 120–122 (VTN) contribute to the NAD(+) site. Asn-122 and Arg-153 together coordinate substrate. The active-site Proton acceptor is His-177.

Belongs to the LDH/MDH superfamily. MDH type 3 family.

The enzyme catalyses (S)-malate + NAD(+) = oxaloacetate + NADH + H(+). Functionally, catalyzes the reversible oxidation of malate to oxaloacetate. This is Malate dehydrogenase from Nitrosococcus oceani (strain ATCC 19707 / BCRC 17464 / JCM 30415 / NCIMB 11848 / C-107).